A 478-amino-acid chain; its full sequence is Probable L-ascorbate peroxidase 8, chloroplastic (478 aa).

The segment covering 1–13 (MAERIAASLLPAA) has biased composition (low complexity). 2 disordered regions span residues 1–31 (MAER…VSAA) and 44–66 (GGLR…RSGR). The N-terminal 76 residues, 1 to 76 (MAERIAASLL…AGAGARAVVR (76 aa)), are a transit peptide targeting the chloroplast. Residues 14 to 26 (SPSPAPSPPPPRP) show a composition bias toward pro residues. Catalysis depends on His117, which acts as the Proton acceptor. The interval 245–276 (AHTLGRSRPDRSGWGKPETKYTKDGPGEPGGQ) is disordered. His246 contributes to the heme b binding site. Thr247 serves as a coordination point for K(+). Basic and acidic residues predominate over residues 251–270 (SRPDRSGWGKPETKYTKDGP). 2 residues coordinate K(+): Thr279 and Asp286. The segment at 346-417 (AKFDPPEGFS…DNNGAAPQPE (72 aa)) is disordered. The span at 369–381 (PAPAPAAAPPPPP) shows a compositional bias: pro residues. Over residues 394–406 (PVTVGAAVASSPA) the composition is skewed to low complexity. A helical membrane pass occupies residues 458-478 (YFLNIMLLIGGLAFLTSLLGS).

It belongs to the peroxidase family. Ascorbate peroxidase subfamily. As to quaternary structure, interacts with SWEET11/OS8N3. It depends on heme b as a cofactor. In terms of tissue distribution, expressed in roots, leaves, stems and flowers. Expressed in leaves, shoots and panicles. Expressed at low levels in roots.

It is found in the plastid. Its subcellular location is the chloroplast thylakoid membrane. The enzyme catalyses L-ascorbate + H2O2 = L-dehydroascorbate + 2 H2O. Functionally, involved in defense response and tolerance to the bacterial pathogen Xanthomonas oryzae pv. oryzae (Xoo). Plays an important role in hydrogen peroxide removal during infection by Xoo. Involved in response to abiotic stress. Plays a role in hydrogen peroxide removal durings salt stress. This Oryza sativa subsp. japonica (Rice) protein is Probable L-ascorbate peroxidase 8, chloroplastic.